The sequence spans 89 residues: Small ribosomal subunit protein uS15 (89 aa).

The protein belongs to the universal ribosomal protein uS15 family. Part of the 30S ribosomal subunit. Forms a bridge to the 50S subunit in the 70S ribosome, contacting the 23S rRNA.

One of the primary rRNA binding proteins, it binds directly to 16S rRNA where it helps nucleate assembly of the platform of the 30S subunit by binding and bridging several RNA helices of the 16S rRNA. Its function is as follows. Forms an intersubunit bridge (bridge B4) with the 23S rRNA of the 50S subunit in the ribosome. The sequence is that of Small ribosomal subunit protein uS15 from Janthinobacterium sp. (strain Marseille) (Minibacterium massiliensis).